Here is an 84-residue protein sequence, read N- to C-terminus: Exodeoxyribonuclease 7 small subunit (84 aa).

It belongs to the XseB family. As to quaternary structure, heterooligomer composed of large and small subunits.

The protein resides in the cytoplasm. It catalyses the reaction Exonucleolytic cleavage in either 5'- to 3'- or 3'- to 5'-direction to yield nucleoside 5'-phosphates.. In terms of biological role, bidirectionally degrades single-stranded DNA into large acid-insoluble oligonucleotides, which are then degraded further into small acid-soluble oligonucleotides. This is Exodeoxyribonuclease 7 small subunit from Yersinia pseudotuberculosis serotype O:1b (strain IP 31758).